The chain runs to 693 residues: Adhesion G-protein coupled receptor G1 (693 aa).

The signal sequence occupies residues 1-25; that stretch reads MTPQSLLQTTLFLLSLLFLVQGAHG. 26 to 33 contacts heparin; it reads RGHREDFR. Topologically, residues 26-401 are extracellular; that stretch reads RGHREDFRFC…SVEVDAVHKH (376 aa). 2 disulfide bridges follow: Cys35-Cys91 and Cys121-Cys177. Residues Asn39, Asn148, and Asn171 are each glycosylated (N-linked (GlcNAc...) asparagine). A heparin-binding site is contributed by 190–200; the sequence is LKHPQKASRRP. The 172-residue stretch at 224–395 folds into the GAIN-B domain; sequence DMVSFEEDRI…AVLMVSSVEV (172 aa). Residues Asn234, Asn303, Asn324, and Asn341 are each glycosylated (N-linked (GlcNAc...) asparagine). 2 disulfides stabilise this stretch: Cys346/Cys377 and Cys366/Cys379. Positions 346 to 395 are GPS; it reads CVFWVEDPTLSSPGHWSSAGCETVRRETQTSCFCNHLTYFAVLMVSSVEV. The tract at residues 384-397 is stachel; it reads YFAVLMVSSVEVDA. The chain crosses the membrane as a helical span at residues 402-424; sequence YLSLLSYVGCVVSALACLVTIAA. The Cytoplasmic portion of the chain corresponds to 425–437; it reads YLCSRVPLPCRRK. The chain crosses the membrane as a helical span at residues 438–460; sequence PRDYTIKVHMNLLLAVFLLDTSF. Residues 461-465 are Extracellular-facing; sequence LLSEP. Residues 466-495 form a helical membrane-spanning segment; the sequence is VALTGSEAGCRASAIFLHFSLLTCLSWMGL. A disulfide bridge connects residues Cys475 and Cys562. Over 496–510 the chain is Cytoplasmic; it reads EGYNLYRLVVEVFGT. Residues 511 to 533 traverse the membrane as a helical segment; sequence YVPGYLLKLSAMGWGFPIFLVTL. At 534 to 562 the chain is on the extracellular side; sequence VALVDVDNYGPIILAVHRTPEGVIYPSMC. Residues 563-588 traverse the membrane as a helical segment; sequence WIRDSLVSYITNLGLFSLVFLFNMAM. Residues 589-602 lie on the Cytoplasmic side of the membrane; the sequence is LATMVVQILRLRPH. Residues 603–624 traverse the membrane as a helical segment; that stretch reads TQKWSHVLTLLGLSLVLGLPWA. Topologically, residues 625–628 are extracellular; that stretch reads LIFF. The chain crosses the membrane as a helical span at residues 629-654; sequence SFASGTFQLVVLYLFSIITSFQGFLI. Residues 655 to 693 lie on the Cytoplasmic side of the membrane; the sequence is FIWYWSMRLQARGGPSPLKSNSDSARLPISSGSTSSSRI. Residues 670 to 693 form a disordered region; sequence SPLKSNSDSARLPISSGSTSSSRI. Low complexity predominate over residues 684-693; that stretch reads SSGSTSSSRI.

Belongs to the G-protein coupled receptor 2 family. LN-TM7 subfamily. In terms of assembly, heterodimer of 2 chains generated by proteolytic processing; the large extracellular N-terminal fragment (ADGRG1 NT) and the membrane-bound C-terminal fragment (ADGRG1-CT) predominantly remain associated and non-covalently linked. ADGRG1 NT self-associates in a trans-trans manner; the homophilic interaction enhances receptor signaling. Interacts with TGM2. Interacts with heparin; leading to the reduction of ADGRG1 shedding. Interacts with COL3A1. Part of a GPCR-tetraspanin complex at least consisting of ADGRG1, CD81, eventually CD9, and GNA11 in which CD81 is enhancing the association of ADGRG1 with GNA11. In terms of processing, autoproteolytically cleaved into 2 fragments; the large extracellular N-terminal fragment (ADGRG1 NT) and the membrane-bound C-terminal fragment (ADGRG1 CT) predominantly remain associated and non-covalently linked. Shedding to yield the secreted ADGRG1 N-terminal fragment seems to involve metalloprotease(s). N-glycosylated. Contains sialic acid residues. Post-translationally, ubiquitinated. Undergoes polyubiquitination upon activation. Widely distributed with highest levels found in thyroid gland, brain and heart. Expressed in a great number of tumor cells. Expression is down-regulated in different tumors from highly metastatic cells.

The protein localises to the cell membrane. The protein resides in the secreted. It is found in the membrane raft. Forms a heterodimer of 2 chains generated by proteolytic processing that remain associated through non-covalent interactions mediated by the GAIN-B domain. In the inactivated receptor, the Stachel sequence (also named stalk) is embedded in the GAIN-B domain, where it adopts a beta-strand conformation. On activation, the Stachel moves into the 7 transmembrane region and adopts a twisted hook-shaped configuration that forms contacts within the receptor, leading to coupling of a G-alpha protein, which activates signaling. The cleaved GAIN-B and N-terminal domains can then dissociate from the rest of the receptor. Adhesion G-protein coupled receptor (aGPCR) for steroid hormone 17alpha-hydroxypregnenolone (17-OH), which is involved in cell adhesion and cell-cell interactions. Ligand binding causes a conformation change that triggers signaling via guanine nucleotide-binding proteins (G proteins) and modulates the activity of downstream effectors, such as RhoA pathway. ADGRG1 is coupled to G(12) and/or G(13) G proteins (GNA12 and GNA13, respectively) and mediates the activation Rho small GTPases. Acts as a potent suppressor of ferroptosis: binding to 17-OH-binding initiates signaling that down-regulates CD36 and alleviates ferroptosis-induced liver injury. Ligand-binding also induces cell adhesion activity via association with proteins such as collagen III/COL3A1 and TGM2. Mediates cell matrix adhesion in developing neurons and hematopoietic stem cells. Involved in cortical development, specifically in maintenance of the pial basement membrane integrity and in cortical lamination: association with COL3A1 in the developing brain inhibits neuronal migration via activation of the RhoA pathway. Together with TGM2, acts as a regulator of myelination and myelin repair in oligodendrocyte precursor cells. Acts as a hemostatic sensor of shear force: G protein-coupled receptor signaling is activated in response to shear force in platelets, promoting G(13) G protein signaling, and platelet shape change and aggregation in a COL3A1-dependent manner. Acts as an inhibitor of VEGFA production thereby inhibiting angiogenesis through a signaling pathway mediated by PRKCA. Plays a role in the maintenance of hematopoietic stem cells in bone marrow niche. Plays an essential role in testis development. The sequence is that of Adhesion G-protein coupled receptor G1 from Homo sapiens (Human).